The primary structure comprises 366 residues: MKISELMEVLNNHVPFHQAESWDNVGLLIGNDKLDITGILTTLDCTDDVVNQAIELNTNTIIAHHPLIFKGVKRIVEDGYGSIIRKLIQNNINLIALHTNLDVNPKGVNRMLADQIGLENISMINTNSSYYYKVQTFIPKNYIEDFKDSLNELGLAKEGNYEYCFFESEGKGQFKPVGDASPYIGKLDSIEYVDEIKLEFMIKDNELEITKRAILDNHPYETPVFDFIKMNKESEYGLGIIGQLNQTMTLDEFSEYAKKQLNIPSVRYTGQHDSPIKKVAIIGGSGIGFEYKASQLGADVFVTGDIKHHDALDAKIQNVNLLDINHYSEYVMKEGLKELLEKWLFKYENQFPIYASEINTDPFKYK.

A divalent metal cation contacts are provided by His64, His65, Asp102, His326, and Glu329.

It belongs to the GTP cyclohydrolase I type 2/NIF3 family. As to quaternary structure, homohexamer.

The chain is GTP cyclohydrolase 1 type 2 homolog from Staphylococcus epidermidis (strain ATCC 35984 / DSM 28319 / BCRC 17069 / CCUG 31568 / BM 3577 / RP62A).